Consider the following 405-residue polypeptide: Arginine biosynthesis bifunctional protein ArgJ (405 aa).

Positions 152, 178, 189, 276, 400, and 405 each coordinate substrate. The Nucleophile role is filled by Thr189.

This sequence belongs to the ArgJ family. In terms of assembly, heterotetramer of two alpha and two beta chains.

It localises to the cytoplasm. It catalyses the reaction N(2)-acetyl-L-ornithine + L-glutamate = N-acetyl-L-glutamate + L-ornithine. The enzyme catalyses L-glutamate + acetyl-CoA = N-acetyl-L-glutamate + CoA + H(+). It participates in amino-acid biosynthesis; L-arginine biosynthesis; L-ornithine and N-acetyl-L-glutamate from L-glutamate and N(2)-acetyl-L-ornithine (cyclic): step 1/1. The protein operates within amino-acid biosynthesis; L-arginine biosynthesis; N(2)-acetyl-L-ornithine from L-glutamate: step 1/4. Functionally, catalyzes two activities which are involved in the cyclic version of arginine biosynthesis: the synthesis of N-acetylglutamate from glutamate and acetyl-CoA as the acetyl donor, and of ornithine by transacetylation between N(2)-acetylornithine and glutamate. The sequence is that of Arginine biosynthesis bifunctional protein ArgJ from Pseudomonas syringae pv. tomato (strain ATCC BAA-871 / DC3000).